A 110-amino-acid polypeptide reads, in one-letter code: Large ribosomal subunit protein uL23c (110 aa).

This sequence belongs to the universal ribosomal protein uL23 family. As to quaternary structure, part of the 50S ribosomal subunit.

The protein localises to the plastid. Its subcellular location is the chloroplast. Its function is as follows. Binds to 23S rRNA. This Porphyra purpurea (Red seaweed) protein is Large ribosomal subunit protein uL23c (rpl23).